Reading from the N-terminus, the 376-residue chain is Lysocardiolipin acyltransferase 1 (376 aa).

The helical transmembrane segment at 9 to 29 threads the bilayer; sequence FILFLFAGSFFGSIFMLGPIL. N35 carries N-linked (GlcNAc...) asparagine glycosylation. A helical transmembrane segment spans residues 48-68; that stretch reads ATWLTLPVALLETMFGVRVVI. The short motif at 85–90 is the HXXXXD motif element; the sequence is HRTRVD. K183 carries the post-translational modification N6-acetyllysine. A run of 2 helical transmembrane segments spans residues 309–329 and 336–356; these read LLSI…IYLY and FIIS…LEII.

Belongs to the 1-acyl-sn-glycerol-3-phosphate acyltransferase family. Widely expressed with highest expression in heart, liver and 12.5 dpc aorta-gonad-mesonephros and lower levels in the 16 dpc fetal liver and adult bone marrow. In bone marrow, highest levels are found in B-cells compared with whole bone marrow, T-cells, erythrocytes, and granulocytes.

The protein localises to the endoplasmic reticulum membrane. The catalysed reaction is a 1-acyl-sn-glycero-3-phosphate + an acyl-CoA = a 1,2-diacyl-sn-glycero-3-phosphate + CoA. The enzyme catalyses a 1-acyl-sn-glycero-3-phospho-(1D-myo-inositol) + an acyl-CoA = a 1,2-diacyl-sn-glycero-3-phospho-(1D-myo-inositol) + CoA. It catalyses the reaction 1-acyl-sn-glycero-3-phospho-(1'-sn-glycerol) + an acyl-CoA = a 1,2-diacyl-sn-glycero-3-phospho-(1'-sn-glycerol) + CoA. It carries out the reaction 1-hexadecanoyl-sn-glycero-3-phosphate + (9Z)-octadecenoyl-CoA = 1-hexadecanoyl-2-(9Z-octadecenoyl)-sn-glycero-3-phosphate + CoA. The catalysed reaction is 1-(9Z-octadecenoyl)-sn-glycero-3-phosphate + (9Z)-octadecenoyl-CoA = 1,2-di-(9Z-octadecenoyl)-sn-glycero-3-phosphate + CoA. The enzyme catalyses 1-(9Z,12Z)-octadecadienoyl-sn-glycero-3-phosphate + (9Z)-octadecenoyl-CoA = 1-(9Z,12Z)-octadecadienoyl-2-(9Z)-octadecenoyl-sn-glycero-3-phosphate + CoA. It catalyses the reaction 1-(9Z,12Z,15Z)-octadecatrienoyl-sn-glycero-3-phosphate + (9Z)-octadecenoyl-CoA = 1-(9Z,12Z,15Z)-octadecatrienoyl-2-(9Z)-octadecenoyl-sn-glycero-3-phosphate + CoA. It carries out the reaction 1-(9Z-octadecenoyl)-sn-glycero-3-phosphate + hexadecanoyl-CoA = 1-(9Z)-octadecenoyl-2-hexadecanoyl-sn-glycero-3-phosphate + CoA. The catalysed reaction is 1-(9Z-octadecenoyl)-sn-glycero-3-phosphate + octadecanoyl-CoA = 1-(9Z-octadecenoyl)-2-octadecanoyl-sn-glycero-3-phosphate + CoA. The enzyme catalyses 1-acyl-sn-glycero-3-phospho-(1'-sn-glycerol) + (9Z)-octadecenoyl-CoA = 1-acyl-2-(9Z-octadecenoyl)-sn-glycero-3-phospho-(1'-sn-glycerol) + CoA. It catalyses the reaction a 1-acyl-sn-glycero-3-phospho-(1D-myo-inositol) + (9Z)-octadecenoyl-CoA = a 1-acyl-2-(9Z-octadecenoyl)-sn-glycero-3-phospho-(1D-myo-inositol) + CoA. It carries out the reaction 1-hexadecanoyl-sn-glycero-3-phospho-(1D-myo-inositol) + hexadecanoyl-CoA = 1,2-dihexadecanoyl-sn-glycero-3-phospho-(1D-myo-inositol) + CoA. The catalysed reaction is 1-hexadecanoyl-sn-glycero-3-phospho-(1D-myo-inositol) + octadecanoyl-CoA = 1-hexadecanoyl-2-octadecanoyl-sn-glycero-3-phospho-(1D-myo-inositol) + CoA. The enzyme catalyses 1-hexadecanoyl-sn-glycero-3-phospho-(1D-myo-inositol) + (9Z)-octadecenoyl-CoA = 1-hexadecanoyl-2-(9Z-octadecenoyl)-sn-glycero-3-phospho-(1D-myo-inositol) + CoA. It catalyses the reaction 1-hexadecanoyl-sn-glycero-3-phospho-(1D-myo-inositol) + (9Z,12Z)-octadecadienoyl-CoA = 1-hexadecanoyl-2-(9Z,12Z-octadecadienoyl)-sn-glycero-3-phospho-(1D-myo-inositol) + CoA. It carries out the reaction 1-hexadecanoyl-sn-glycero-3-phospho-(1D-myo-inositol) + (5Z,8Z,11Z,14Z)-eicosatetraenoyl-CoA = 1-hexadecanoyl-2-(5Z,8Z,11Z,14Z-eicosatetraenoyl)-sn-glycero-3-phospho-D-myo-inositol + CoA. The catalysed reaction is 1-hexadecanoyl-sn-glycero-3-phospho-(1'-sn-glycerol) + hexadecanoyl-CoA = 1,2-dihexadecanoyl-sn-glycero-3-phospho-(1'-sn-glycerol) + CoA. The enzyme catalyses 1-hexadecanoyl-sn-glycero-3-phospho-(1'-sn-glycerol) + octadecanoyl-CoA = 1-hexadecanoyl-2-octadecanoyl-sn-glycero-3-phospho-(1'-sn-glycerol) + CoA. It catalyses the reaction 1-hexadecanoyl-sn-glycero-3-phospho-(1'-sn-glycerol) + (9Z)-octadecenoyl-CoA = 1-hexadecanoyl-2-(9Z-octadecenoyl)-sn-glycero-3-phospho-(1'-sn-glycerol) + CoA. It carries out the reaction 1-hexadecanoyl-sn-glycero-3-phospho-(1'-sn-glycerol) + (9Z,12Z)-octadecadienoyl-CoA = 1-hexadecanoyl-2-(9Z,12Z-octadecadienoyl)-sn-glycero-3-phospho-(1'-sn-glycerol) + CoA. The catalysed reaction is 1-tetradecanoyl-sn-glycero-3-phospho-(1'-sn-glycerol) + (9Z)-octadecenoyl-CoA = 1-tetradecanoyl-2-(9Z-octadecenoyl)-sn-glycero-3-phospho-(1'-sn-glycerol) + CoA. The enzyme catalyses 1-octadecanoyl-sn-glycero-3-phospho-(1'-sn-glycerol) + (9Z)-octadecenoyl-CoA = 1-octadecanoyl-2-(9Z-octadecenoyl)-sn-glycero-3-phospho-(1'-sn-glycerol) + CoA. It catalyses the reaction 1-(9Z-octadecenoyl)-sn-glycero-3-phospho-(1'-sn-glycerol) + (9Z)-octadecenoyl-CoA = 1,2-di-(9Z-octadecenoyl)-sn-glycero-3-phospho-(1'-sn-glycerol) + CoA. It carries out the reaction 1-hexadecanoyl-sn-glycero-3-phospho-(1D-myo-inositol) + dodecanoyl-CoA = 1-hexadecanoyl-2-dodecanoyl-sn-glycero-3-phospho-(1D-myo-inositol) + CoA. The catalysed reaction is 1',3'-bis-[1-acyl-sn-glycero-3-phospho]-glycerol + (9Z)-octadecenoyl-CoA = 1'-[1-acyl-2-(9Z)-octadecenoyl-sn-glycero-3-phospho],3'-[1-acyl,2-hydroxy-sn-glycero-3-phospho]-glycerol + CoA. The enzyme catalyses 1'-[1,2-diacyl-sn-glycero-3-phospho],3'-[1-acyl-sn-glycero-3-phospho]-glycerol + (9Z)-octadecenoyl-CoA = 1'-[1,2-diacyl-sn-glycero-3-phospho],3'-[1-acyl,2-(9Z)-octadecenoyl-sn-glycero-3-phospho]-glycerol + CoA. It catalyses the reaction 1'-[1,2-diacyl-sn-glycero-3-phospho],3'-[1-acyl-sn-glycero-3-phospho]-glycerol + (9Z,12Z)-octadecadienoyl-CoA = 1'-[1,2-diacyl-sn-glycero-3-phospho],3'-[1-acyl,2-(9Z,12Z)-octadecadienoyl-sn-glycero-3-phospho]-glycerol + CoA. It carries out the reaction 1'-[1,2-diacyl-sn-glycero-3-phospho],3'-[1-acyl-sn-glycero-3-phospho]-glycerol + dodecanoyl-CoA = 1'-[1,2-diacyl-sn-glycero-3-phospho],3'-[1-acyl,2-dodecanoyl-sn-glycero-3-phospho]-glycerol + CoA. The catalysed reaction is 1',3'-bis-[1-acyl-sn-glycero-3-phospho]-glycerol + dodecanoyl-CoA = 1'-[1-acyl-2-dodecanoyl-sn-glycero-3-phospho],3'-[1-acyl,2-hydroxy-sn-glycero-3-phospho]-glycerol + CoA. The enzyme catalyses a 1-acyl-sn-glycero-3-phosphate + (9Z)-octadecenoyl-CoA = a 1-acyl-2-(9Z-octadecenoyl)-sn-glycero-3-phosphate + CoA. It catalyses the reaction 1',3'-bis-[1-acyl-sn-glycero-3-phospho]-glycerol + (9Z,12Z)-octadecadienoyl-CoA = 1'-[1-acyl-2-(9Z,12Z)-octadecadienoyl-sn-glycero-3-phospho],3'-[1-acyl,2-hydroxy-sn-glycero-3-phospho]-glycerol + CoA. It carries out the reaction 1',3'-bis-[1-acyl-sn-glycero-3-phospho]-glycerol + hexadecanoyl-CoA = 1'-[1-acyl-2-hexadecanoyl-sn-glycero-3-phospho],3'-[1-acyl,2-hydroxy-sn-glycero-3-phospho]-glycerol + CoA. The catalysed reaction is 1',3'-bis-[1-acyl-sn-glycero-3-phospho]-glycerol + octadecanoyl-CoA = 1'-[1-acyl-2-octadecanoyl-sn-glycero-3-phospho],3'-[1-acyl,2-hydroxy-sn-glycero-3-phospho]-glycerol + CoA. The enzyme catalyses 1'-[1,2-diacyl-sn-glycero-3-phospho],3'-[1-acyl-sn-glycero-3-phospho]-glycerol + octanoyl-CoA = 1'-[1,2-diacyl-sn-glycero-3-phospho],3'-[1-acyl,2-octanoyl-sn-glycero-3-phospho]-glycerol + CoA. It catalyses the reaction 1',3'-bis-[1-acyl-sn-glycero-3-phospho]-glycerol + octanoyl-CoA = 1'-[1-acyl-2-octanoyl-sn-glycero-3-phospho],3'-[1-acyl,2-hydroxy-sn-glycero-3-phospho]-glycerol + CoA. It carries out the reaction 1'-[1,2-diacyl-sn-glycero-3-phospho],3'-[1-acyl-sn-glycero-3-phospho]-glycerol + hexadecanoyl-CoA = 1'-[1,2-diacyl-sn-glycero-3-phospho],3'-[1-acyl,2-hexadecanoyl-sn-glycero-3-phospho]-glycerol + CoA. The catalysed reaction is 1'-[1,2-diacyl-sn-glycero-3-phospho],3'-[1-acyl-sn-glycero-3-phospho]-glycerol + (5Z,8Z,11Z,14Z)-eicosatetraenoyl-CoA = 1'-[1,2-diacyl-sn-glycero-3-phospho],3'-[1-acyl,2-(5Z,8Z,11Z,14Z)-eicosatetraenoyl-sn-glycero-3-phospho]-glycerol + CoA. The enzyme catalyses 1',3'-bis-[1-acyl-sn-glycero-3-phospho]-glycerol + (5Z,8Z,11Z,14Z)-eicosatetraenoyl-CoA = 1'-[1-acyl-2-(5Z,8Z,11Z,14Z)-eicosatetraenoyl-sn-glycero-3-phospho],3'-[1-acyl,2-hydroxy-sn-glycero-3-phospho]-glycerol + CoA. It catalyses the reaction a 1-acyl-sn-glycero-3-phospho-(1D-myo-inositol) + octadecanoyl-CoA = a 1-acyl-2-octadecanoyl-sn-glycero-3-phospho-(1D-myo-inositol) + CoA. It carries out the reaction a 2-acyl-sn-glycero-3-phospho-D-myo-inositol + octadecanoyl-CoA = 1-octadecanoyl-2-acyl-sn-glycero-3-phospho-1D-myo-inositol + CoA. It functions in the pathway phospholipid metabolism; CDP-diacylglycerol biosynthesis; CDP-diacylglycerol from sn-glycerol 3-phosphate: step 2/3. In terms of biological role, exhibits acyl-CoA:lysocardiolipin acyltransferase (ALCAT) activity; catalyzes the reacylation of lyso-cardiolipin to cardiolipin (CL), a key step in CL remodeling. Recognizes both monolysocardiolipin and dilysocardiolipin as substrates with a preference for linoleoyl-CoA and oleoyl-CoA as acyl donors. Also exhibits 1-acyl-sn-glycerol-3-phosphate acyltransferase activity (AGPAT) activity; converts 1-acyl-sn-glycerol-3- phosphate (lysophosphatidic acid or LPA) into 1,2-diacyl-sn-glycerol-3- phosphate (phosphatidic acid or PA) by incorporating an acyl moiety at the sn-2 position of the glycerol backbone. Possesses lysophosphatidylinositol acyltransferase (LPIAT) activity. Possesses lysophosphatidylglycerol acyltransferase (LPGAT) activity. Required for establishment of the hematopoietic and endothelial lineages. This chain is Lysocardiolipin acyltransferase 1 (Lclat1), found in Mus musculus (Mouse).